The primary structure comprises 346 residues: MNPHATPVLVLSLALGTTITISSNHWVLAWTGLEINTLAIIPLISKSHHPRAVEAATKYFLTQAAASALVLFSSMTNAWATGQWDITQLNHPTSCLLLTAAIAIKLGLVPFHFWFPEVLQGSPLMTALLLSTLMKFPPLTLLLMTSKSLNPALLTTMALASAALGGWMGLNQTQTRKILAFSSISHLGWIAIILVYNPKLALLTFYLYTIMTSAVFMALNKIKALNLSMILTSWTKTPVLNATLMLVLLSLAGLPPLTGFMPKWLIIQELTKQEMTPAAMAIAMLSLLSLFFYLRLAYHSTITLPPNSSNHMKQWYTSKPPSTPTAILASLSILLLPLSPMIHAIV.

A run of 11 helical transmembrane segments spans residues 1-21 (MNPH…TITI), 25-45 (HWVL…PLIS), 60-80 (FLTQ…NAWA), 95-115 (CLLL…HFWF), 124-144 (LMTA…LLLM), 149-169 (LNPA…GWMG), 178-195 (ILAF…IILV), 200-219 (LALL…FMAL), 242-262 (ATLM…GFMP), 274-294 (EMTP…FFYL), and 326-346 (AILA…HAIV).

Belongs to the complex I subunit 2 family.

The protein resides in the mitochondrion inner membrane. The catalysed reaction is a ubiquinone + NADH + 5 H(+)(in) = a ubiquinol + NAD(+) + 4 H(+)(out). In terms of biological role, core subunit of the mitochondrial membrane respiratory chain NADH dehydrogenase (Complex I) that is believed to belong to the minimal assembly required for catalysis. Complex I functions in the transfer of electrons from NADH to the respiratory chain. The immediate electron acceptor for the enzyme is believed to be ubiquinone. In Sibirionetta formosa (Baikal teal), this protein is NADH-ubiquinone oxidoreductase chain 2 (MT-ND2).